A 481-amino-acid chain; its full sequence is RAC-alpha serine/threonine-protein kinase (481 aa).

The PH domain occupies 5–108 (AIVKEGWLHK…WIQVIQHVAD (104 aa)). The tract at residues 120-141 (VRSGDSPSDNSGAEEMEVSHSK) is disordered. O-linked (GlcNAc) serine glycans are attached at residues Ser-127 and Ser-130. Positions 151-409 (FEYLKLLGKG…AKEIMQHKFF (259 aa)) constitute a Protein kinase domain. ATP-binding positions include 157-165 (LGKGTFGKV) and Lys-180. Asp-275 functions as the Proton acceptor in the catalytic mechanism. A glycan (O-linked (GlcNAc) threonine) is linked at Thr-306. Thr-309 bears the Phosphothreonine; by PDPK1 mark. O-linked (GlcNAc) threonine glycosylation occurs at Thr-313. The AGC-kinase C-terminal domain maps to 410–481 (AGIVWQDVYE…QFSYSASGNA (72 aa)). Ser-474 bears the Phosphoserine mark. O-linked (GlcNAc) serine; alternate glycosylation occurs at Ser-474. Phosphotyrosine is present on Tyr-475.

The protein belongs to the protein kinase superfamily. AGC Ser/Thr protein kinase family. RAC subfamily. In terms of processing, cleavage by caspase-3/CASP3. Cleaved at the caspase-3 consensus site Asp-463 during apoptosis, resulting in down-regulation of the AKT signaling pathway and decreased cell survival. Phosphorylation on Thr-309 and Ser-474 is required for full activity. Phosphorylation of the activation loop at Thr-309 by PDPK1/PDK1 is a prerequisite for full activation. Phosphorylation by mTORC2 at Ser-474 in response to growth factors plays a key role in AKT1 activation by facilitating subsequent phosphorylation of the activation loop by PDPK1/PDK1. As to expression, expressed in the oocyte.

The protein resides in the cytoplasm. It localises to the nucleus. The enzyme catalyses L-seryl-[protein] + ATP = O-phospho-L-seryl-[protein] + ADP + H(+). It catalyses the reaction L-threonyl-[protein] + ATP = O-phospho-L-threonyl-[protein] + ADP + H(+). With respect to regulation, activated in response to insulin. Three specific sites, one in the kinase domain (Thr-309) and the two other ones in the C-terminal regulatory region (Ser-474 and Tyr-475), need to be phosphorylated for its full activation. In terms of biological role, AKT1 is one of several closely related serine/threonine-protein kinases known as the AKT kinase, and which regulate many processes including metabolism, proliferation, cell survival, growth and angiogenesis. This is mediated through serine and/or threonine phosphorylation of a range of downstream substrates. Over 100 substrate candidates have been reported so far, but for most of them, no isoform specificity has been reported. Signals downstream of phosphatidylinositol 3-kinase (PI(3)K) to mediate the effects of various growth factors such as platelet-derived growth factor (PDGF), epidermal growth factor (EGF), insulin and insulin-like growth factor 1 (IGF1). Plays a role as a key modulator of the AKT-mTOR signaling pathway controlling the tempo of the process of newborn neurons integration during adult neurogenesis, including correct neuron positioning, dendritic development and synapse formation. Plays a role in glucose transport by mediating insulin-induced translocation of the GLUT4 glucose transporter to the cell surface. Mediates the antiapoptotic effects of IGF1. Mediates insulin-stimulated protein synthesis, partly by playing a role in both insulin-induced phosphorylation of 4E-BP1 and in insulin-induced activation of p70 S6 kinase. Promotes glycogen synthesis by mediating the insulin-induced activation of glycogen synthase. Required for insulin-stimulated meiotic reinitiation during oocyte maturation. May be involved in the regulation of vesicular functions such as preciliary trafficking and endocytic recycling. This Xenopus laevis (African clawed frog) protein is RAC-alpha serine/threonine-protein kinase.